The following is a 397-amino-acid chain: Elongation factor Tu (397 aa).

The tr-type G domain occupies 10–207 (KPHVNIGTIG…ACDSYIPEPQ (198 aa)). The segment at 19 to 26 (GHIDHGKT) is G1. 19 to 26 (GHIDHGKT) is a GTP binding site. Thr26 is a binding site for Mg(2+). The tract at residues 60–64 (GITIA) is G2. Positions 81 to 84 (DCPG) are G3. Residues 81-85 (DCPGH) and 136-139 (NKCD) each bind GTP. Residues 136–139 (NKCD) are G4. The G5 stretch occupies residues 174 to 176 (SAL).

Belongs to the TRAFAC class translation factor GTPase superfamily. Classic translation factor GTPase family. EF-Tu/EF-1A subfamily. Monomer.

It localises to the cytoplasm. It carries out the reaction GTP + H2O = GDP + phosphate + H(+). Functionally, GTP hydrolase that promotes the GTP-dependent binding of aminoacyl-tRNA to the A-site of ribosomes during protein biosynthesis. The sequence is that of Elongation factor Tu from Nitratidesulfovibrio vulgaris (strain DSM 19637 / Miyazaki F) (Desulfovibrio vulgaris).